Consider the following 585-residue polypeptide: DNA ligase (585 aa).

E278 is a binding site for ATP. Residue K280 is the N6-AMP-lysine intermediate of the active site. Residues R285, R301, E330, F370, R444, and K450 each contribute to the ATP site.

The protein belongs to the ATP-dependent DNA ligase family. Requires Mg(2+) as cofactor.

It carries out the reaction ATP + (deoxyribonucleotide)n-3'-hydroxyl + 5'-phospho-(deoxyribonucleotide)m = (deoxyribonucleotide)n+m + AMP + diphosphate.. DNA ligase that seals nicks in double-stranded DNA during DNA replication, DNA recombination and DNA repair. This is DNA ligase from Haloferax volcanii (strain ATCC 29605 / DSM 3757 / JCM 8879 / NBRC 14742 / NCIMB 2012 / VKM B-1768 / DS2) (Halobacterium volcanii).